A 184-amino-acid polypeptide reads, in one-letter code: Mitochondrial import inner membrane translocase subunit TIM22 (184 aa).

Positions 1 to 26 (MSLWGVYTGPQPPKKPLQEMTQEEQA) are disordered. 2 cysteine pairs are disulfide-bonded: C40–C118 and C137–C156. Helical transmembrane passes span 45–65 (VMAG…MASM) and 151–171 (AALV…MYLN).

The protein belongs to the Tim17/Tim22/Tim23 family. In terms of assembly, component of the TIM22 complex, whose core is composed of TIM22 and TIM54, associated with the 70 kDa heterohexamer composed of TIM9 and TIM10 (or TIM8 and TIM13).

Its subcellular location is the mitochondrion inner membrane. In terms of biological role, essential core component of the TIM22 complex, a complex that mediates the import and insertion of multi-pass transmembrane proteins into the mitochondrial inner membrane. In the TIM22 complex, it constitutes the voltage-activated and signal-gated channel. Forms a twin-pore translocase that uses the membrane potential as external driving force in 2 voltage-dependent steps. This chain is Mitochondrial import inner membrane translocase subunit TIM22, found in Candida albicans (strain SC5314 / ATCC MYA-2876) (Yeast).